We begin with the raw amino-acid sequence, 573 residues long: Splicing factor U2af large subunit A (573 aa).

A disordered region spans residues 1–175 (MSEFEDHEGN…KSKQRVSGFD (175 aa)). The span at 22-93 (NGGRDGEIED…ERSRDKDRDH (72 aa)) shows a compositional bias: basic and acidic residues. Residues 94–105 (RERHHRSSRHRD) show a composition bias toward basic residues. Positions 106–141 (HSRERGERRERGGRDDDDYRRSRDRDHDRRRDDRGG) are enriched in basic and acidic residues. The span at 159–169 (TRSRSPSKSKQ) shows a compositional bias: basic residues. RRM domains lie at 239–322 (RRVY…RPSD), 359–437 (DRIF…RANQ), and 478–564 (QVVT…YPED).

This sequence belongs to the splicing factor SR family. As to quaternary structure, component of the spliceosome. Interacts with SUA. Interacts with SF1 in the nucleus.

The protein resides in the nucleus. Its function is as follows. Necessary for the splicing of pre-mRNA. The chain is Splicing factor U2af large subunit A from Arabidopsis thaliana (Mouse-ear cress).